The sequence spans 160 residues: S-adenosylmethionine decarboxylase proenzyme (160 aa).

Ser73 (schiff-base intermediate with substrate; via pyruvic acid) is an active-site residue. Residue Ser73 is modified to Pyruvic acid (Ser); by autocatalysis. The active-site Proton acceptor; for processing activity is His78. Cys93 serves as the catalytic Proton donor; for catalytic activity.

This sequence belongs to the prokaryotic AdoMetDC family. Type 1 subfamily. In terms of assembly, heterotetramer of two alpha and two beta chains arranged as a dimer of alpha/beta heterodimers. The cofactor is pyruvate. Is synthesized initially as an inactive proenzyme. Formation of the active enzyme involves a self-maturation process in which the active site pyruvoyl group is generated from an internal serine residue via an autocatalytic post-translational modification. Two non-identical subunits are generated from the proenzyme in this reaction, and the pyruvate is formed at the N-terminus of the alpha chain, which is derived from the carboxyl end of the proenzyme. The post-translation cleavage follows an unusual pathway, termed non-hydrolytic serinolysis, in which the side chain hydroxyl group of the serine supplies its oxygen atom to form the C-terminus of the beta chain, while the remainder of the serine residue undergoes an oxidative deamination to produce ammonia and the pyruvoyl group blocking the N-terminus of the alpha chain.

The enzyme catalyses S-adenosyl-L-methionine + H(+) = S-adenosyl 3-(methylsulfanyl)propylamine + CO2. It participates in amine and polyamine biosynthesis; S-adenosylmethioninamine biosynthesis; S-adenosylmethioninamine from S-adenosyl-L-methionine: step 1/1. Catalyzes the decarboxylation of S-adenosylmethionine to S-adenosylmethioninamine (dcAdoMet), the propylamine donor required for the synthesis of the polyamines spermine and spermidine from the diamine putrescine. The chain is S-adenosylmethionine decarboxylase proenzyme from Pseudomonas paraeruginosa (strain DSM 24068 / PA7) (Pseudomonas aeruginosa (strain PA7)).